The following is a 148-amino-acid chain: Sec-independent protein translocase protein TatB (148 aa).

A helical membrane pass occupies residues 1–21 (MFGISFSELLLVGLVALLVLG). The segment at 85–148 (EPTPVEHVGE…NDTTQPPRAP (64 aa)) is disordered. A compositionally biased stretch (low complexity) spans 107–148 (APAVAPTESAPVVAPASVEHVAQTAAPTTPAPNDTTQPPRAP).

This sequence belongs to the TatB family. The Tat system comprises two distinct complexes: a TatABC complex, containing multiple copies of TatA, TatB and TatC subunits, and a separate TatA complex, containing only TatA subunits. Substrates initially bind to the TatABC complex, which probably triggers association of the separate TatA complex to form the active translocon.

It is found in the cell inner membrane. In terms of biological role, part of the twin-arginine translocation (Tat) system that transports large folded proteins containing a characteristic twin-arginine motif in their signal peptide across membranes. Together with TatC, TatB is part of a receptor directly interacting with Tat signal peptides. TatB may form an oligomeric binding site that transiently accommodates folded Tat precursor proteins before their translocation. The chain is Sec-independent protein translocase protein TatB from Pseudomonas fluorescens (strain Pf0-1).